The primary structure comprises 198 residues: Na(+)-translocating NADH-quinone reductase subunit E (198 aa).

6 consecutive transmembrane segments (helical) span residues 11–31 (SIFI…FLAV), 39–59 (FGLG…NNLV), 77–97 (FLNF…LEMI), 110–130 (GIFL…SFMV), 140–160 (VVYG…LAGI), and 176–196 (LGIT…FSGV).

The protein belongs to the NqrDE/RnfAE family. Composed of six subunits; NqrA, NqrB, NqrC, NqrD, NqrE and NqrF.

It is found in the cell inner membrane. The catalysed reaction is a ubiquinone + n Na(+)(in) + NADH + H(+) = a ubiquinol + n Na(+)(out) + NAD(+). Functionally, NQR complex catalyzes the reduction of ubiquinone-1 to ubiquinol by two successive reactions, coupled with the transport of Na(+) ions from the cytoplasm to the periplasm. NqrA to NqrE are probably involved in the second step, the conversion of ubisemiquinone to ubiquinol. This is Na(+)-translocating NADH-quinone reductase subunit E from Vibrio anguillarum (Listonella anguillarum).